An 887-amino-acid polypeptide reads, in one-letter code: Lateral signaling target protein 2 homolog (887 aa).

A Glycyl lysine isopeptide (Lys-Gly) (interchain with G-Cter in ubiquitin) cross-link involves residue Lys87. The tract at residues 308 to 327 (PALSAPLPPEGPLSAKAKDP) is disordered. Ser334 is modified (phosphoserine). Disordered regions lie at residues 354–396 (DEMS…GSDE) and 412–474 (ALAR…ASLA). At Thr516 the chain carries Phosphothreonine. Ser586 is modified (phosphoserine; by MAP2K). The disordered stretch occupies residues 599 to 714 (LAKASDRAPE…THAAPQATRE (116 aa)). Positions 602–612 (ASDRAPERQEE) are enriched in basic and acidic residues. Polar residues predominate over residues 638–648 (TSGSQVDTASG). Low complexity-rich tracts occupy residues 681–693 (SGSSSSTAGSCSS) and 700–711 (AAPAATHAAPQA). Residues 817-879 (DEACGFCTAC…THCYMFHVTP (63 aa)) form an FYVE-type zinc finger. Zn(2+)-binding residues include Cys823, Cys826, Cys839, Cys842, Cys847, Cys850, and Cys869. Residue Thr870 is modified to Phosphothreonine; by MAP2K. Cys872 lines the Zn(2+) pocket.

Belongs to the lst-2 family. In terms of assembly, interacts with TRIM3. Monoubiquitination at Lys-87 prevents binding to phosphatidylinositol 3-phosphate (PI3P) and localization to early endosome membranes.

The protein localises to the cytoplasm. The protein resides in the cytosol. It localises to the early endosome membrane. Its function is as follows. Negative regulator of epidermal growth factor receptor (EGFR) signaling. Acts by promoting EGFR degradation in endosomes when not monoubiquitinated. This chain is Lateral signaling target protein 2 homolog (ZFYVE28), found in Homo sapiens (Human).